The sequence spans 251 residues: Probable aquaporin TIP4-1 (251 aa).

Transmembrane regions (helical) follow at residues 26 to 46 (LVLT…AGVP) and 57 to 77 (ALAG…TAGF). The short motif at 85–87 (NPA) is the NPA 1 element. 3 helical membrane passes run 104–124 (ALYV…LRYL), 144–164 (GLVM…ATIL), and 170–190 (VPGF…IAGG). Positions 198-200 (NPA) match the NPA 2 motif. Residues 219–239 (WLGPLIGGPLAGLVYESLFLV) form a helical membrane-spanning segment.

This sequence belongs to the MIP/aquaporin (TC 1.A.8) family. TIP (TC 1.A.8.10) subfamily. As to expression, expressed in roots, leaves and anthers.

The protein localises to the vacuole membrane. Functionally, aquaporins facilitate the transport of water and small neutral solutes across cell membranes. May be involved in transport from the vacuolar compartment to the cytoplasm. The polypeptide is Probable aquaporin TIP4-1 (TIP4-1) (Oryza sativa subsp. japonica (Rice)).